Reading from the N-terminus, the 106-residue chain is Photosystem II 5 kDa protein, chloroplastic (106 aa).

The N-terminal 76 residues, 1–76 (MASITMMSSF…ACSVAKTAMA (76 aa)), are a transit peptide targeting the chloroplast. Cysteines 95 and 104 form a disulfide.

Post-translationally, disulfide bond. In terms of tissue distribution, expressed in midvein, lamina and periphery of leaves (at protein level).

It localises to the plastid. The protein resides in the chloroplast thylakoid membrane. May be a component of the oxygen-evolving complex. In Petunia hybrida (Petunia), this protein is Photosystem II 5 kDa protein, chloroplastic.